The following is a 113-amino-acid chain: Large ribosomal subunit protein bL19 (113 aa).

This sequence belongs to the bacterial ribosomal protein bL19 family.

This protein is located at the 30S-50S ribosomal subunit interface and may play a role in the structure and function of the aminoacyl-tRNA binding site. The protein is Large ribosomal subunit protein bL19 of Mycobacterium sp. (strain JLS).